The following is a 1381-amino-acid chain: DNA-directed RNA polymerase subunit beta' (1381 aa).

4 residues coordinate Zn(2+): C70, C72, C85, and C88. Residues D461, D463, and D465 each contribute to the Mg(2+) site. 4 residues coordinate Zn(2+): C801, C875, C882, and C885. Residues 1362–1381 (VEIEGDENSNKKSLDMHAAN) are disordered. The segment covering 1369–1381 (NSNKKSLDMHAAN) has biased composition (basic and acidic residues).

The protein belongs to the RNA polymerase beta' chain family. In terms of assembly, the RNAP catalytic core consists of 2 alpha, 1 beta, 1 beta' and 1 omega subunit. When a sigma factor is associated with the core the holoenzyme is formed, which can initiate transcription. The cofactor is Mg(2+). Zn(2+) is required as a cofactor.

The enzyme catalyses RNA(n) + a ribonucleoside 5'-triphosphate = RNA(n+1) + diphosphate. In terms of biological role, DNA-dependent RNA polymerase catalyzes the transcription of DNA into RNA using the four ribonucleoside triphosphates as substrates. This chain is DNA-directed RNA polymerase subunit beta', found in Syntrophus aciditrophicus (strain SB).